A 413-amino-acid chain; its full sequence is Inactive serine protease 35 (413 aa).

Positions 1-16 (MENMLLWLIFFTPGWT) are cleaved as a signal peptide. N-linked (GlcNAc...) asparagine glycosylation is present at asparagine 90. One can recognise a Peptidase S1 domain in the interval 124–408 (VYGTDSRFSI…ICLWIHGNDA (285 aa)). Cysteine 154 and cysteine 170 form a disulfide bridge. A compositionally biased stretch (basic residues) spans 191-207 (MRNKSGGKKRRGSKRSR). The segment at 191–250 (MRNKSGGKKRRGSKRSRREASGGDQREGTREHLRERAKGGRRRKKSGRGQRIAEGRPSFQ) is disordered. Residues 208 to 228 (REASGGDQREGTREHLRERAK) show a composition bias toward basic and acidic residues. Residues 229–238 (GGRRRKKSGR) show a composition bias toward basic residues.

This sequence belongs to the peptidase S1 family.

The protein resides in the secreted. The sequence is that of Inactive serine protease 35 (PRSS35) from Homo sapiens (Human).